The chain runs to 490 residues: 5'-3' exonuclease PLD3 (490 aa).

Residues 1–38 (MKPKLMYQELKVPAEEPANELPMNEIEAWKAAEKKARW) are Cytoplasmic-facing. Residues 39-59 (VLLVLILAVVGFGALMTQLFL) traverse the membrane as a helical; Signal-anchor for type II membrane protein segment. The Lumenal segment spans residues 60 to 490 (WEYGDLHLFG…DSVGNACRLL (431 aa)). Intrachain disulfides connect Cys77–Cys239 and Cys81–Cys237. N-linked (GlcNAc...) asparagine glycosylation is found at Asn97 and Asn132. The region spanning 196–223 (THGVLHTKFWVVDQTHFYLGSANMDWRS) is the PLD phosphodiesterase 1 domain. Catalysis depends on residues His201, Lys203, and Asp208. His201 functions as the Proton donor in the catalytic mechanism. 2 residues coordinate phosphate: His201 and Lys203. Asn218 is a phosphate binding site. N-linked (GlcNAc...) asparagine glycans are attached at residues Asn236, Asn284, and Asn387. Cys366 and Cys487 form a disulfide bridge. The PLD phosphodiesterase 2 domain occupies 411-437 (YARVNHNKYMVTERATYIGTSNWSGNY). Position 416 (His416) interacts with phosphate. The active-site Nucleophile is His416. Phe438 contacts Mg(2+).

The protein belongs to the phospholipase D family. As to quaternary structure, homodimer. Interacts with APP. In terms of processing, N-glycosylated. Post-translationally, proteolytically processed to a soluble form that is stable within endosomes and lysosomes. During transport through the secretory pathway becomes proteolysed by cysteine proteases, thereby releasing a stable soluble lysosomal lumenal polypeptide, whereas the transmembrane-bound fragment is rapidly degraded. Its transport route to lysosomes involves ubiquitination and the ESCRT complex. Ubiquitinated. Ubiquitination mediates sorting into lysosomes.

It localises to the endoplasmic reticulum membrane. The protein resides in the lysosome lumen. The protein localises to the early endosome membrane. Its subcellular location is the late endosome membrane. It is found in the golgi apparatus membrane. It localises to the endosome membrane. The catalysed reaction is Exonucleolytic cleavage in the 5'- to 3'-direction to yield nucleoside 3'-phosphates.. The enzyme catalyses a 5'-end 5'-dephospho-ribonucleotidyl-ribonucleotide-RNA + H2O = a ribonucleoside 3'-phosphate + a 5'-end dephospho-ribonucleoside-RNA + H(+). It carries out the reaction a ribonucleoside 3'-phosphate-2'-3'-cyclophospho-GMP + H2O = a ribonucleoside 3'-phosphate + 2',3'-cyclophospho-GMP + H(+). It catalyses the reaction a 5'-end 5'-dephospho-2'-deoxyribonucleotidyl-2'-deoxyribonucleotide in single-stranded DNA + H2O = a 5'-end dephospho-2'-deoxyribonucleoside in single-stranded DNA + a 2'-deoxyribonucleoside 3'-phosphate + H(+). The catalysed reaction is a 5'-end 5'-phospho-2'-deoxyribonucleotide in single-stranded DNA + H2O = a 5'-end 5'-dephospho-2'-deoxyribonucleotide in single-stranded DNA + phosphate. The enzyme catalyses a 3-lyso-sn-glycero-1-phospho-(3'-acyl-1'-sn-glycerol) + a 1-acyl-sn-glycerol = a 3-acyl-sn-glycero-1-phospho-(3'-acyl-1'-sn-glycerol) + glycerol. It carries out the reaction 3-lyso-sn-glycero-1-phospho-(3'-(9Z-octadecenoyl)-1'-sn-glycerol) + 1-(9Z-octadecenoyl)-sn-glycerol = 3-(9Z-octadecenoyl)-sn-glycero-1-phospho-(3'-(9Z-octadecenoyl)-1'-sn-glycerol) + glycerol. Functionally, 5'-&gt;3' exonuclease that hydrolyzes the phosphodiester bond of single-stranded DNA (ssDNA) and RNA molecules to form nucleoside 3'-monophosphates and 5'-end 5'-hydroxy deoxyribonucleotide/ribonucleotide fragments. Partially redundant with PLD4, can cleave all four nucleotides displaying higher efficiency for ssDNA and RNA fragments initiated with uridine and guanosine residues and lower efficiency for cytidine-initiated substrates. As a result, it does not always degrade polynucleotides to the single nucleotide level, it can stall at specific sites sparing certain fragments from exonucleolytic degradation. Processes self and pathogenic ssDNA and RNA molecules that reach the endolysosomal compartment via phagocytosis or autophagy and may serve as 'danger' signals for recognition by innate immune receptors such as toll-like receptors (TLRs). Degrades mitochondrial CpG-rich ssDNA fragments to prevent TLR9 activation and autoinflammatory response, but it can cleave viral RNA to generate ligands for TLR7 activation and initiate antiviral immune responses. In plasmacytoid dendritic cells, it cooperates with endonuclease RNASET2 to release 2',3'-cyclic guanosine monophosphate (2',3'-cGMP), a potent stimulatory ligand for TLR7. Produces 2',3'-cGMPs and cytidine-rich RNA fragments that occupy TLR7 ligand-binding pockets and trigger a signaling-competent state. Can exert polynucleotide phosphatase activity toward 5'-phosphorylated ssDNA substrates although at a slow rate. Transphosphatidylase that catalyzes the exchange with R to S stereo-inversion of the glycerol moiety between (S,R)-lysophosphatidylglycerol (LPG) and monoacylglycerol (MAG) substrates to yield (S,S)-bis(monoacylglycero)phosphate (BMP). Can synthesize a variety of (S,S)-BMPs representing the main phospholipid constituent of lysosomal intralumenal vesicle (ILV) membranes that bind acid hydrolases for lipid degradation. Regulates the homeostasis and interorganellar communication of the endolysosomal system with an overall impact on cellular removal of dysfunctional organelles via autophagy as well as proper protein and lipid turnover. May play a role in myotube formation in response to ER stress. The polypeptide is 5'-3' exonuclease PLD3 (PLD3) (Pongo abelii (Sumatran orangutan)).